We begin with the raw amino-acid sequence, 807 residues long: 85/88 kDa calcium-independent phospholipase A2 (807 aa).

Position 13 is a phosphoserine (S13). ANK repeat units lie at residues 120–147, 151–181, 185–215, 219–248, 251–281, 286–312, 316–345, 349–378, and 382–403; these read WTVTHLAVELGIRECFHHSRIISCANST, EGCTPLHLACRKGDSEILVELVQYCHAQMDV, KGETAFHYAVQGDNPQVLQLLGKNASAGLNQ, QGLTPLHLACQMGKQEMVRVLLLCNARCNI, PGGFPIHTAMKFSQKGCAEMIISMDSNQIHS, YGASPLHWAKNAEMARMLLKRGCDVDS, SGNTALHVAVTRNRFDCVMVLLTYGANAGA, HGNTPLHLAMSKDNMEMVKALIVFGAEVDT, and FGETPAFIASKISKLITRKALL. 2 consecutive transmembrane segments (helical) span residues 481 to 501 and 512 to 532; these read LLCLDGGGVKGLVIIQLLIAI and LFDWVAGTSTGGILALAILHS. A PNPLA domain is found at 482–666; it reads LCLDGGGVKG…LANNPTLDAM (185 aa). The GXGXXG motif lies at 486 to 491; the sequence is GGGVKG. The GXSXG signature appears at 518 to 522; that stretch reads GTSTG. S520 acts as the Nucleophile in catalysis. D653 serves as the catalytic Proton acceptor. Residues 653-655 carry the DGA/G motif; that stretch reads DGG. The segment at 678–687 is calmodulin-binding (1-9-14 motif); the sequence is RKGQGNKVKK. The interval 749–760 is calmodulin-binding (IQ motif); it reads AWCEMVGIQYFR.

Homodimer formed by catalytic domains tightly interacting through a large hydrophobic interface. The contact area involves 3 alpha helices, several loops and a part of the beta sheet from each monomer. Both active sites of the dimer are in close proximity adopting an open conformation that provide sufficient space for phospholipid access and favoring cooperativity in deacylation-reacylation reactions. Each monomer has 9 ankyrin repeats stacked side-by-side in an elongated structure oriented outwards from the catalytic core. Expressed in pancreatic beta-cells. Expressed in skeletal muscle (at protein level).

It is found in the cytoplasm. The protein localises to the cell membrane. Its subcellular location is the mitochondrion. The protein resides in the cell projection. It localises to the pseudopodium. The enzyme catalyses a 1,2-diacyl-sn-glycero-3-phosphocholine + H2O = a 1-acyl-sn-glycero-3-phosphocholine + a fatty acid + H(+). It carries out the reaction a 1-O-alkyl-2-acyl-sn-glycero-3-phosphocholine + H2O = a 1-O-alkyl-sn-glycero-3-phosphocholine + a fatty acid + H(+). It catalyses the reaction 1,2-dihexadecanoyl-sn-glycero-3-phosphocholine + H2O = 1-hexadecanoyl-sn-glycero-3-phosphocholine + hexadecanoate + H(+). The catalysed reaction is 1-hexadecanoyl-2-(9Z-octadecenoyl)-sn-glycero-3-phosphocholine + H2O = 1-hexadecanoyl-sn-glycero-3-phosphocholine + (9Z)-octadecenoate + H(+). The enzyme catalyses 1-hexadecanoyl-2-(9Z,12Z-octadecadienoyl)-sn-glycero-3-phosphocholine + H2O = (9Z,12Z)-octadecadienoate + 1-hexadecanoyl-sn-glycero-3-phosphocholine + H(+). It carries out the reaction 1-hexadecanoyl-2-(5Z,8Z,11Z,14Z-eicosatetraenoyl)-sn-glycero-3-phosphocholine + H2O = 1-hexadecanoyl-sn-glycero-3-phosphocholine + (5Z,8Z,11Z,14Z)-eicosatetraenoate + H(+). It catalyses the reaction 1-octadecanoyl-2-(5Z,8Z,11Z,14Z-eicosatetraenoyl)-sn-glycero-3-phosphocholine + H2O = 1-octadecanoyl-sn-glycero-3-phosphocholine + (5Z,8Z,11Z,14Z)-eicosatetraenoate + H(+). The catalysed reaction is 1-hexadecanoyl-2-(5Z,8Z,11Z,14Z-eicosatetraenoyl)-sn-glycero-3-phosphoethanolamine + H2O = 1-hexadecanoyl-sn-glycero-3-phosphoethanolamine + (5Z,8Z,11Z,14Z)-eicosatetraenoate + H(+). The enzyme catalyses 1,2-dihexadecanoyl-sn-glycero-3-phosphate + H2O = 1-hexadecanoyl-sn-glycero-3-phosphate + hexadecanoate + H(+). It carries out the reaction a 1-acyl-sn-glycero-3-phosphocholine + H2O = sn-glycerol 3-phosphocholine + a fatty acid + H(+). It catalyses the reaction 1-hexadecanoyl-sn-glycero-3-phosphocholine + H2O = sn-glycerol 3-phosphocholine + hexadecanoate + H(+). The catalysed reaction is 1-(5Z,8Z,11Z,14Z-eicosatetraenoyl)-sn-glycero-3-phosphocholine + H2O = sn-glycerol 3-phosphocholine + (5Z,8Z,11Z,14Z)-eicosatetraenoate + H(+). The enzyme catalyses 2-(5Z,8Z,11Z,14Z)-eicosatetraenoyl-sn-glycero-3-phosphocholine + H2O = sn-glycerol 3-phosphocholine + (5Z,8Z,11Z,14Z)-eicosatetraenoate + H(+). It carries out the reaction 1-O-hexadecyl-2-(5Z,8Z,11Z,14Z)-eicosatetraenoyl-sn-glycero-3-phosphocholine + H2O = 1-O-hexadecyl-sn-glycero-3-phosphocholine + (5Z,8Z,11Z,14Z)-eicosatetraenoate + H(+). It catalyses the reaction 1-O-hexadecyl-2-acetyl-sn-glycero-3-phosphocholine + H2O = 1-O-hexadecyl-sn-glycero-3-phosphocholine + acetate + H(+). The catalysed reaction is hexadecanoyl-CoA + H2O = hexadecanoate + CoA + H(+). The enzyme catalyses 1',3'-bis[1,2-di-(9Z-octadecenoyl)-sn-glycero-3-phospho]-glycerol + H2O = 1'-[1,2-di-(9Z-octadecenoyl)-sn-glycero-3-phospho]-3'-[1-(9Z-octadecenoyl)-sn-glycero-3-phospho]-glycerol + (9Z)-octadecenoate + H(+). It carries out the reaction 1'-[1,2-di-(9Z-octadecenoyl)-sn-glycero-3-phospho]-3'-[1-(9Z-octadecenoyl)-sn-glycero-3-phospho]-glycerol + H2O = 1',3'-bis-[1-(9Z-octadecenoyl)-sn-glycero-3-phospho]-glycerol + (9Z)-octadecenoate + H(+). It catalyses the reaction 1',3'-bis-[1,2-di-(9Z,12Z-octadecadienoyl)-sn-glycero-3-phospho]-glycerol + H2O = 1'-[1,2-di-(9Z,12Z-octadecadienoyl)-sn-glycero-3-phospho]-3'-[1-(9Z,12Z-octadecadienoyl)-sn-glycero-3-phospho]-glycerol + (9Z,12Z)-octadecadienoate + H(+). The catalysed reaction is 1-octadecanoyl-2-(15-hydroxy-(5Z,8Z,11Z,13E)-eicosatetraenoyl)-sn-glycero-3-phosphoethanolamine + H2O = 1-octadecanoyl-sn-glycero-3-phosphoethanolamine + 15-hydroxy-(5Z,8Z,11Z,13E)-eicosatetraenoate + H(+). Its activity is regulated as follows. Activated by ATP. Inhibited by calcium-activated calmodulin. Inhibited by bromoenol lactone (BEL). Its function is as follows. Calcium-independent phospholipase involved in phospholipid remodeling with implications in cellular membrane homeostasis, mitochondrial integrity and signal transduction. Hydrolyzes the ester bond of the fatty acyl group attached at sn-1 or sn-2 position of phospholipids (phospholipase A1 and A2 activity respectively), producing lysophospholipids that are used in deacylation-reacylation cycles. Hydrolyzes both saturated and unsaturated long fatty acyl chains in various glycerophospholipid classes such as phosphatidylcholines, phosphatidylethanolamines and phosphatidates, with a preference for hydrolysis at sn-2 position. Can further hydrolyze lysophospholipids carrying saturated fatty acyl chains (lysophospholipase activity). Upon oxidative stress, contributes to remodeling of mitochondrial phospholipids in pancreatic beta cells, in a repair mechanism to reduce oxidized lipid content. Preferentially hydrolyzes oxidized polyunsaturated fatty acyl chains from cardiolipins, yielding monolysocardiolipins that can be reacylated with unoxidized fatty acyls to regenerate native cardiolipin species. Hydrolyzes oxidized glycerophosphoethanolamines present in pancreatic islets, releasing oxidized polyunsaturated fatty acids such as hydroxyeicosatetraenoates (HETEs). Has thioesterase activity toward fatty-acyl CoA releasing CoA-SH known to facilitate fatty acid transport and beta-oxidation in mitochondria particularly in skeletal muscle. Plays a role in regulation of membrane dynamics and homeostasis. Selectively hydrolyzes sn-2 arachidonoyl group in plasmalogen phospholipids, structural components of lipid rafts and myelin. Regulates F-actin polymerization at the pseudopods, which is required for both speed and directionality of MCP1/CCL2-induced monocyte chemotaxis. Targets membrane phospholipids to produce potent lipid signaling messengers. Generates lysophosphatidate (LPA, 1-acyl-glycerol-3-phosphate), which acts via G-protein receptors in various cell types. Has phospholipase A2 activity toward platelet-activating factor (PAF, 1-O-alkyl-2-acetyl-sn-glycero-3-phosphocholine), likely playing a role in inactivation of this potent pro-inflammatory signaling lipid. In response to glucose, amplifies calcium influx in pancreatic beta cells to promote INS secretion. The chain is 85/88 kDa calcium-independent phospholipase A2 (Pla2g6) from Rattus norvegicus (Rat).